The following is a 200-amino-acid chain: Glycosyl hydrolase family 19 domain-containing protein HI_1415 (200 aa).

It belongs to the glycosyl hydrolase 19 family.

This Haemophilus influenzae (strain ATCC 51907 / DSM 11121 / KW20 / Rd) protein is Glycosyl hydrolase family 19 domain-containing protein HI_1415.